We begin with the raw amino-acid sequence, 250 residues long: MKHSHVLLLLFVQVIVLLPLLCLSDDFVNSRATYYGSPDCKANPRGHCGYGEFGRDINNGEVSGVSWRLWNNGTGCGACYQVRCKIPPHCSEEGVYVVATDSGEGDGTDFILSPKAYGRMARPGTENQLYSFGVVNVEYQRIPCRYAGYNLVYKIHEKSYNPHYLAILVLYVGGVNDILAVEVWQEDCKEWRRMRRVFGAVHDLQNPPRGTLTLRFLVYGSAGINWIQSPNAIPADWTAGATYDSNILLT.

A signal peptide spans 1–24 (MKHSHVLLLLFVQVIVLLPLLCLS). An Expansin-like EG45 domain is found at 45–149 (RGHCGYGEFG…QRIPCRYAGY (105 aa)). A glycan (N-linked (GlcNAc...) asparagine) is linked at N72. The 83-residue stretch at 163-245 (HYLAILVLYV…DWTAGATYDS (83 aa)) folds into the Expansin-like CBD domain.

The protein belongs to the expansin family. Expansin-like B subfamily.

The protein resides in the secreted. The protein is Expansin-like B1 (EXLB1) of Arabidopsis thaliana (Mouse-ear cress).